Reading from the N-terminus, the 102-residue chain is MNAIPMEHGLALSGVLFSLGLIGLMVRRNILFVLMSLEVMMNAAALAFVVAGSRWAQADGQIMFILVITLAAAEASIGLAILLQLHRRFHTLDIDAASEMRG.

Transmembrane regions (helical) follow at residues 6–26 (MEHG…GLMV), 30–50 (ILFV…AFVV), and 62–82 (IMFI…LAIL).

This sequence belongs to the complex I subunit 4L family. In terms of assembly, NDH-1 is composed of 13 different subunits. Subunits NuoA, H, J, K, L, M, N constitute the membrane sector of the complex.

It is found in the cell inner membrane. It catalyses the reaction a quinone + NADH + 5 H(+)(in) = a quinol + NAD(+) + 4 H(+)(out). NDH-1 shuttles electrons from NADH, via FMN and iron-sulfur (Fe-S) centers, to quinones in the respiratory chain. The immediate electron acceptor for the enzyme in this species is believed to be ubiquinone. Couples the redox reaction to proton translocation (for every two electrons transferred, four hydrogen ions are translocated across the cytoplasmic membrane), and thus conserves the redox energy in a proton gradient. This Azotobacter vinelandii (strain DJ / ATCC BAA-1303) protein is NADH-quinone oxidoreductase subunit K.